A 365-amino-acid polypeptide reads, in one-letter code: Chorismate synthase (365 aa).

The NADP(+) site is built by R48 and R54. Residues 125-127 (RSS), 237-238 (NA), G277, 292-296 (KPTSS), and R318 each bind FMN.

It belongs to the chorismate synthase family. As to quaternary structure, homotetramer. It depends on FMNH2 as a cofactor.

The enzyme catalyses 5-O-(1-carboxyvinyl)-3-phosphoshikimate = chorismate + phosphate. It functions in the pathway metabolic intermediate biosynthesis; chorismate biosynthesis; chorismate from D-erythrose 4-phosphate and phosphoenolpyruvate: step 7/7. Its function is as follows. Catalyzes the anti-1,4-elimination of the C-3 phosphate and the C-6 proR hydrogen from 5-enolpyruvylshikimate-3-phosphate (EPSP) to yield chorismate, which is the branch point compound that serves as the starting substrate for the three terminal pathways of aromatic amino acid biosynthesis. This reaction introduces a second double bond into the aromatic ring system. The chain is Chorismate synthase from Polaromonas naphthalenivorans (strain CJ2).